A 547-amino-acid polypeptide reads, in one-letter code: Cellodextrinase (547 aa).

Aspartate 148 acts as the Nucleophile in catalysis. Active-site residues include histidine 474, aspartate 520, and glutamate 529.

Belongs to the glycosyl hydrolase 9 (cellulase E) family.

The protein resides in the secreted. The enzyme catalyses Endohydrolysis of (1-&gt;4)-beta-D-glucosidic linkages in cellulose, lichenin and cereal beta-D-glucans.. Is not inhibited by methylcellulose. Functionally, glycoside hydrolase that rapidly hydrolyzes short-chain cellodextrins to yield either cellobiose or cellobiose and glucose as end products; cellobiose is not hydrolyzed further. Also shows limited activity against endoglucanase specific substrates (carboxymethylcellulose (CMC), lichenan, laminarin and xylan). The polypeptide is Cellodextrinase (Butyrivibrio fibrisolvens).